The following is a 266-amino-acid chain: DNA primase (266 aa).

The disordered stretch occupies residues 244–266 (VTTTTTPSPPKIGSMQTTTKSTT). The span at 257–266 (SMQTTTKSTT) shows a compositional bias: polar residues.

This sequence belongs to the baculoviridae LEF-1 family. Interacts with LEF-2.

Its function is as follows. Plays an essential role in viral DNA replication. May generates single-stranded DNA for both leading and lagging strand synthesis. The primase initiates primer synthesis and thereby produces large amount of short RNA primers on the lagging strand that the polymerase elongates using dNTPs. The protein is DNA primase (LEF-1) of Autographa californica nuclear polyhedrosis virus (AcMNPV).